Reading from the N-terminus, the 100-residue chain is MLEGFWVLEIRVTTKARENKVVSLEDGILRVRVTEAPERGKANDAVVALLAKFLSIPKNDVTLIAGEASRRKKVLLPRAIKAFLFEQFPQTSSPDAGKKC.

It belongs to the UPF0235 family.

The chain is UPF0235 protein TC_0667 from Chlamydia muridarum (strain MoPn / Nigg).